The following is a 57-amino-acid chain: MAFDKKLLEIVACPVCKGKLEYNKEAQQLICKADRLVYPINDGIPVLLENKAEPLIE.

It belongs to the UPF0434 family.

The polypeptide is UPF0434 protein Shal_2504 (Shewanella halifaxensis (strain HAW-EB4)).